The chain runs to 388 residues: Na(+)/H(+) antiporter NhaA (388 aa).

Residues Met1–Asp11 are Cytoplasmic-facing. The chain crosses the membrane as a helical span at residues Ala12–Ser31. Residues Gly32–Asn58 lie on the Periplasmic side of the membrane. A helical transmembrane segment spans residues Met59–Lys80. The Cytoplasmic segment spans residues Arg81–Phe96. A helical transmembrane segment spans residues Pro97–Asn116. Residues Tyr117 to Thr122 are Periplasmic-facing. The helical transmembrane segment at Arg123–Ala130 threads the bilayer. Residues Ala131–Ile154 lie on the Cytoplasmic side of the membrane. Residues Phe155–Thr176 traverse the membrane as a helical segment. Residues Asn177 to Ser180 are Periplasmic-facing. The helical transmembrane segment at Met181–Cys200 threads the bilayer. Topologically, residues Gly201 to Arg204 are cytoplasmic. The chain crosses the membrane as a helical span at residues Thr205 to Ser222. Gly223 is a topological domain (periplasmic). The chain crosses the membrane as a helical span at residues Val224–Phe236. Residues Ile237–His253 lie on the Cytoplasmic side of the membrane. A helical membrane pass occupies residues Val254–Ala272. Topologically, residues Gly273–Ser286 are periplasmic. A helical transmembrane segment spans residues Ile287 to Leu310. Residues Ala311–Phe339 lie on the Cytoplasmic side of the membrane. Residues Thr340–Phe350 traverse the membrane as a helical segment. The Periplasmic segment spans residues Gly351–Leu357. The chain crosses the membrane as a helical span at residues Ile358–Leu380. The Cytoplasmic portion of the chain corresponds to Arg381–Val388.

It belongs to the NhaA Na(+)/H(+) (TC 2.A.33) antiporter family.

It localises to the cell inner membrane. It carries out the reaction Na(+)(in) + 2 H(+)(out) = Na(+)(out) + 2 H(+)(in). Its function is as follows. Na(+)/H(+) antiporter that extrudes sodium in exchange for external protons. In Shigella flexneri serotype 5b (strain 8401), this protein is Na(+)/H(+) antiporter NhaA.